The sequence spans 97 residues: Homeobox protein HD-9 (97 aa).

The homeobox DNA-binding region spans Met6–Cys65.

Its subcellular location is the nucleus. The sequence is that of Homeobox protein HD-9 (HD-9) from Encephalitozoon cuniculi (strain GB-M1) (Microsporidian parasite).